Here is a 494-residue protein sequence, read N- to C-terminus: MASGILVNVKEEVTCPICLELLTQPLSLDCGHSFCQACLTANHKTSMPDEGERSCPVCRISYQHKNIRPNRHVANIVEKLREVKLSPEEGQKVDHCARHGEKLLLFCREDRKVICWLCERSQEHRGHHTFLTEEVAQEYQMKLQAALQMLRQKQQEAEELEADIREEKASWKTQIQYDKTNILADFEQLRHILDWVESNELQNLEKEKKDVLKRLMKSEIEMVQQTQSVRELISDLEHRLQGSVMELLQGVDGIIKRMKNVTLKKPETFPKNKRRVFRAADLKVMLEVLRELRDVRRYWVDVTVAPNNISYAVISEDMRQVSSPEPQIICEAQGTISQTFVNFNYCTGILGSQSITSGKHYWEVDVSKKSAWILGVCAGLQPDAMYNIEQNENYQPKCGYWVIGLEERVKCNAFQDGSFHTPSAPFIVPLSVNICPDRVGVFLDYEACTVSFFNITDHGFLIYKFSRCSFSQPVFPYLNPRKCTVPMTLCSPSS.

An N-acetylalanine modification is found at Ala2. The segment at 15-59 (CPICLELLTQPLSLDCGHSFCQACLTANHKTSMPDEGERSCPVCR) adopts an RING-type zinc-finger fold. At Ser86 the chain carries Phosphoserine. The B box-type zinc-finger motif lies at 91-133 (QKVDHCARHGEKLLLFCREDRKVICWLCERSQEHRGHHTFLTE). Zn(2+) is bound by residues Cys96, His99, Cys118, and His124. Residues 132–241 (TEEVAQEYQM…LISDLEHRLQ (110 aa)) are a coiled coil. The tract at residues 186–199 (FEQLRHILDWVESN) is required for interaction with GABARAP and for autophagy. The B30.2/SPRY domain maps to 282–494 (LKVMLEVLRE…VPMTLCSPSS (213 aa)).

This sequence belongs to the TRIM/RBCC family. As to quaternary structure, can form homodimers and homotrimers. In addition to lower-order dimerization, also exhibits a higher-order multimerization and both low- and high-order multimerizations are essential for its restriction activity. Interacts with BTBD1 and BTBD2. Interacts with PSMC4, PSMC5, PSMD7 and HSPA8/HSC70. Interacts (via B30.2/SPRY domain) with HSPA1A/B. Interacts with PSMC2, MAP3K7/TAK1, TAB2 and TAB3. Interacts with SQSTM1. Interacts with TRIM6 and TRIM34. Interacts with ULK1 (phosphorylated form), GABARAP, GABARAPL1, GABARAPL2, MAP1LC3A, MAP1LC3C and BECN1. Post-translationally, degraded in a proteasome-independent fashion in the absence of viral infection but in a proteasome-dependent fashion following exposure to restriction sensitive virus. Autoubiquitinated in a RING finger- and UBE2D2-dependent manner. Monoubiquitinated by TRIM21. Deubiquitinated by Yersinia YopJ. Ubiquitination may not lead to proteasomal degradation.

The protein localises to the cytoplasm. Its subcellular location is the nucleus. It catalyses the reaction S-ubiquitinyl-[E2 ubiquitin-conjugating enzyme]-L-cysteine + [acceptor protein]-L-lysine = [E2 ubiquitin-conjugating enzyme]-L-cysteine + N(6)-ubiquitinyl-[acceptor protein]-L-lysine.. It functions in the pathway protein modification; protein ubiquitination. Its function is as follows. Capsid-specific restriction factor that prevents infection from non-host-adapted retroviruses. Blocks viral replication early in the life cycle, after viral entry but before reverse transcription. In addition to acting as a capsid-specific restriction factor, also acts as a pattern recognition receptor that activates innate immune signaling in response to the retroviral capsid lattice. Binding to the viral capsid triggers its E3 ubiquitin ligase activity, and in concert with the heterodimeric ubiquitin conjugating enzyme complex UBE2V1-UBE2N (also known as UBC13-UEV1A complex) generates 'Lys-63'-linked polyubiquitin chains, which in turn are catalysts in the autophosphorylation of the MAP3K7/TAK1 complex (includes TAK1, TAB2, and TAB3). Activation of the MAP3K7/TAK1 complex by autophosphorylation results in the induction and expression of NF-kappa-B and MAPK-responsive inflammatory genes, thereby leading to an innate immune response in the infected cell. Plays a role in regulating autophagy through activation of autophagy regulator BECN1 by causing its dissociation from its inhibitors BCL2 and TAB2. This Hoolock hoolock (Western hoolock gibbon) protein is Tripartite motif-containing protein 5 (TRIM5).